Here is a 361-residue protein sequence, read N- to C-terminus: Queuine tRNA-ribosyltransferase (361 aa).

The Proton acceptor role is filled by aspartate 92. Residues 92 to 96, aspartate 146, glutamine 189, and glycine 216 each bind substrate; that span reads DSGGF. The tract at residues 247–253 is RNA binding; that stretch reads GVGKPAD. The active-site Nucleophile is aspartate 266. Residues 271 to 275 are RNA binding; important for wobble base 34 recognition; that stretch reads TRSGR. Zn(2+)-binding residues include cysteine 304, cysteine 306, cysteine 309, and histidine 335.

The protein belongs to the queuine tRNA-ribosyltransferase family. As to quaternary structure, homodimer. Within each dimer, one monomer is responsible for RNA recognition and catalysis, while the other monomer binds to the replacement base PreQ1. It depends on Zn(2+) as a cofactor.

The enzyme catalyses 7-aminomethyl-7-carbaguanine + guanosine(34) in tRNA = 7-aminomethyl-7-carbaguanosine(34) in tRNA + guanine. It participates in tRNA modification; tRNA-queuosine biosynthesis. Functionally, catalyzes the base-exchange of a guanine (G) residue with the queuine precursor 7-aminomethyl-7-deazaguanine (PreQ1) at position 34 (anticodon wobble position) in tRNAs with GU(N) anticodons (tRNA-Asp, -Asn, -His and -Tyr). Catalysis occurs through a double-displacement mechanism. The nucleophile active site attacks the C1' of nucleotide 34 to detach the guanine base from the RNA, forming a covalent enzyme-RNA intermediate. The proton acceptor active site deprotonates the incoming PreQ1, allowing a nucleophilic attack on the C1' of the ribose to form the product. After dissociation, two additional enzymatic reactions on the tRNA convert PreQ1 to queuine (Q), resulting in the hypermodified nucleoside queuosine (7-(((4,5-cis-dihydroxy-2-cyclopenten-1-yl)amino)methyl)-7-deazaguanosine). The sequence is that of Queuine tRNA-ribosyltransferase from Rickettsia canadensis (strain McKiel).